The sequence spans 246 residues: Small ribosomal subunit protein uS2 (246 aa).

It belongs to the universal ribosomal protein uS2 family.

This is Small ribosomal subunit protein uS2 from Pseudomonas aeruginosa (strain LESB58).